The sequence spans 1431 residues: Collagen alpha-1(XVII) chain (1431 aa).

Residues 1–468 (MDVTKKNKRD…AWCPCGSCCS (468 aa)) lie on the Cytoplasmic side of the membrane. The segment at 1-569 (MDVTKKNKRD…MTEQENGNLR (569 aa)) is nonhelical region (NC16). Disordered regions lie at residues 25–155 (TRLT…PSTR), 167–188 (KGSR…PIPK), 304–324 (TAYG…TGVS), and 422–449 (SVEN…GGGG). Residues 60–74 (GSSGYINSSGSIRGN) are compositionally biased toward low complexity. Polar residues-rich tracts occupy residues 75 to 96 (ASTS…SPGS), 111 to 120 (EGSSSGNSSP), and 170 to 184 (RSAS…SSTL). Residues 146-231 (RLQSASPSTR…WSSTLPAGSS (86 aa)) form a necessary for interaction with DST and for the recruitment of DST to hemidesmosome region. Gly residues predominate over residues 430 to 449 (RGGGSGGGARGGGGSGGGGG). Residues 469–489 (WWKWLLGLLLTWLLLLGLLFG) form a helical; Signal-anchor for type II membrane protein membrane-spanning segment. The Extracellular portion of the chain corresponds to 490–1431 (LIALAEEVRK…RRRRSIAIKP (942 aa)). Serine 547 carries the phosphoserine; by CK2 modification. Disordered regions lie at residues 564–869 (ENGN…SFIS), 884–996 (DLRG…SSSG), 1158–1178 (DIIG…PGVS), and 1208–1249 (FIIG…SSSV). Residues 570-1417 (GNPGPKGDMG…KGDKGDKGDQ (848 aa)) form a triple-helical region region. Composition is skewed to low complexity over residues 657–673 (PRGL…RGPN), 738–751 (EPGA…AGPD), and 778–799 (PGKP…PGRP). Composition is skewed to pro residues over residues 823-844 (PGPP…PGPA), 889-911 (LGPP…PRGP), 937-946 (PPGPPGPPGP), 979-989 (PPGPPGPPGPP), 1162-1174 (PPGP…PRGP), and 1212-1221 (PPGPPGPQGP). Asparagine 1230 carries an N-linked (GlcNAc...) asparagine glycan. Residues 1232–1249 (SWGSSSSARRGTAYSSSV) are compositionally biased toward polar residues. An N-linked (GlcNAc...) asparagine glycan is attached at asparagine 1356. The tract at residues 1366 to 1431 (RTHGAIPGPP…RRRRSIAIKP (66 aa)) is disordered. Positions 1407–1416 (QKGDKGDKGD) are enriched in basic and acidic residues. The interval 1418–1431 (VYTGRRRRSIAIKP) is nonhelical region (NC1). Over residues 1421 to 1431 (GRRRRSIAIKP) the composition is skewed to basic residues.

Homotrimers of alpha 1(XVII)chains. Interacts (via cytoplasmic region) with ITGB4 (via cytoplasmic region). Interacts (via cytoplasmic region) with DST (via N-terminus). Interacts (via N-terminus) with PLEC. Interacts (via cytoplasmic region) with DSP. In terms of processing, the intracellular/endo domain is disulfide-linked. Post-translationally, prolines at the third position of the tripeptide repeating unit (G-X-Y) are hydroxylated in some or all of the chains. The ectodomain is shedded from the surface of keratinocytes resulting in a 120-kDa soluble form, also named as 120 kDa linear IgA disease antigen homolog. The shedding is mediated by membrane-bound metalloproteases. This cleavage is inhibited by phosphorylation at Ser-547.

The protein resides in the cell junction. It localises to the hemidesmosome. Its subcellular location is the membrane. The protein localises to the secreted. It is found in the extracellular space. The protein resides in the extracellular matrix. It localises to the basement membrane. May play a role in the integrity of hemidesmosome and the attachment of basal keratinocytes to the underlying basement membrane. Its function is as follows. The 120 kDa linear IgA disease antigen homolog is an anchoring filament component involved in dermal-epidermal cohesion. This Mesocricetus auratus (Golden hamster) protein is Collagen alpha-1(XVII) chain (COL17A1).